Consider the following 823-residue polypeptide: Protein FAM193B (823 aa).

Disordered stretches follow at residues 1 to 78, 158 to 191, 209 to 281, and 381 to 409; these read MTRR…TSQS, SCKSQSCGGDSHSSSSSSSSSSSSSSSCHGNSGD, SPHS…PTTP, and CEADEGLGEEEDSSSERSSCTSSSTHQRD. Positions 26 to 36 are enriched in pro residues; sequence PQAPEPPPPPS. Basic and acidic residues predominate over residues 52-64; that stretch reads PYRDDPREEDEPK. Low complexity-rich tracts occupy residues 168–184 and 263–281; these read SHSSSSSSSSSSSSSSS and SHPGSFGSPPHPHLLPTTP. Positions 382-393 are enriched in acidic residues; sequence EADEGLGEEEDS. The stretch at 422 to 484 forms a coiled coil; the sequence is GHNAEKEKAQ…RLQEIKNTVK (63 aa). Disordered stretches follow at residues 503 to 583 and 599 to 775; these read FSKE…PENG and WVKT…PKDM. Polar residues-rich tracts occupy residues 516 to 526 and 641 to 657; these read LAPSNPSGSSE and QGNQAKKSEVSPASQSP. Ser694, Ser706, and Ser813 each carry phosphoserine.

The protein belongs to the FAM193 family.

The protein resides in the cytoplasm. It is found in the nucleus. This chain is Protein FAM193B (FAM193B), found in Bos taurus (Bovine).